Here is a 394-residue protein sequence, read N- to C-terminus: Phosphoglycerate kinase (394 aa).

Substrate is bound by residues 21-23, arginine 37, 60-63, arginine 115, and arginine 148; these read DLN and HLGR. ATP-binding positions include lysine 199, glutamate 321, and 347 to 350; that span reads GGDT.

It belongs to the phosphoglycerate kinase family. As to quaternary structure, monomer.

The protein resides in the cytoplasm. The enzyme catalyses (2R)-3-phosphoglycerate + ATP = (2R)-3-phospho-glyceroyl phosphate + ADP. It participates in carbohydrate degradation; glycolysis; pyruvate from D-glyceraldehyde 3-phosphate: step 2/5. The polypeptide is Phosphoglycerate kinase (Aromatoleum aromaticum (strain DSM 19018 / LMG 30748 / EbN1) (Azoarcus sp. (strain EbN1))).